Here is a 215-residue protein sequence, read N- to C-terminus: Probable Rab-related GTPase (215 aa).

Residue 20-27 coordinates GTP; it reads GSSGVGKS. An Effector region motif is present at residues 42–50; that stretch reads VSPTIGAAF. GTP contacts are provided by residues 69–73 and 127–130; these read DTAGQ and NKID. 2 S-geranylgeranyl cysteine; by host lipidation sites follow: Cys-211 and Cys-212. Position 212 is a cysteine methyl ester; by host (Cys-212). Positions 213 to 215 are cleaved as a propeptide — removed in mature form; it reads YIS.

The protein belongs to the small GTPase superfamily. Rab family.

The protein resides in the host cell membrane. Its function is as follows. May be involved in protein transport. This Acanthamoeba polyphaga mimivirus (APMV) protein is Probable Rab-related GTPase.